The primary structure comprises 366 residues: Ribosomal RNA large subunit methyltransferase M (366 aa).

S-adenosyl-L-methionine-binding positions include Ser-188, 221-224, Asp-240, Asp-260, and Asp-277; that span reads CPGG. The active-site Proton acceptor is the Lys-306.

The protein belongs to the class I-like SAM-binding methyltransferase superfamily. RNA methyltransferase RlmE family. RlmM subfamily. As to quaternary structure, monomer.

The protein resides in the cytoplasm. It catalyses the reaction cytidine(2498) in 23S rRNA + S-adenosyl-L-methionine = 2'-O-methylcytidine(2498) in 23S rRNA + S-adenosyl-L-homocysteine + H(+). Its function is as follows. Catalyzes the 2'-O-methylation at nucleotide C2498 in 23S rRNA. The sequence is that of Ribosomal RNA large subunit methyltransferase M from Shigella boydii serotype 4 (strain Sb227).